The chain runs to 195 residues: ATP-dependent Clp protease proteolytic subunit (195 aa).

The Nucleophile role is filled by S98. H123 is an active-site residue.

This sequence belongs to the peptidase S14 family. As to quaternary structure, fourteen ClpP subunits assemble into 2 heptameric rings which stack back to back to give a disk-like structure with a central cavity, resembling the structure of eukaryotic proteasomes.

It is found in the cytoplasm. The catalysed reaction is Hydrolysis of proteins to small peptides in the presence of ATP and magnesium. alpha-casein is the usual test substrate. In the absence of ATP, only oligopeptides shorter than five residues are hydrolyzed (such as succinyl-Leu-Tyr-|-NHMec, and Leu-Tyr-Leu-|-Tyr-Trp, in which cleavage of the -Tyr-|-Leu- and -Tyr-|-Trp bonds also occurs).. Functionally, cleaves peptides in various proteins in a process that requires ATP hydrolysis. Has a chymotrypsin-like activity. Plays a major role in the degradation of misfolded proteins. This is ATP-dependent Clp protease proteolytic subunit from Helicobacter pylori (strain Shi470).